A 155-amino-acid chain; its full sequence is Small ribosomal subunit protein uS7 (155 aa).

It belongs to the universal ribosomal protein uS7 family. In terms of assembly, part of the 30S ribosomal subunit. Contacts proteins S9 and S11.

In terms of biological role, one of the primary rRNA binding proteins, it binds directly to 16S rRNA where it nucleates assembly of the head domain of the 30S subunit. Is located at the subunit interface close to the decoding center, probably blocks exit of the E-site tRNA. The sequence is that of Small ribosomal subunit protein uS7 from Helicobacter hepaticus (strain ATCC 51449 / 3B1).